The chain runs to 418 residues: Tyrosine--tRNA ligase (418 aa).

Tyrosine 34 lines the L-tyrosine pocket. The 'HIGH' region motif lies at 39 to 48 (PTADSLHLGH). Tyrosine 169 and glutamine 173 together coordinate L-tyrosine. Positions 229-233 (KFGKS) match the 'KMSKS' region motif. Lysine 232 provides a ligand contact to ATP. The S4 RNA-binding domain maps to 352–418 (LNLVDMLVTA…GKKKYAVLTY (67 aa)).

The protein belongs to the class-I aminoacyl-tRNA synthetase family. TyrS type 1 subfamily. As to quaternary structure, homodimer.

Its subcellular location is the cytoplasm. It catalyses the reaction tRNA(Tyr) + L-tyrosine + ATP = L-tyrosyl-tRNA(Tyr) + AMP + diphosphate + H(+). Its function is as follows. Catalyzes the attachment of tyrosine to tRNA(Tyr) in a two-step reaction: tyrosine is first activated by ATP to form Tyr-AMP and then transferred to the acceptor end of tRNA(Tyr). In Streptococcus pyogenes serotype M3 (strain SSI-1), this protein is Tyrosine--tRNA ligase.